Consider the following 515-residue polypeptide: Signal transduction histidine-protein kinase/phosphatase MprB (515 aa).

Residues Met-1–Arg-24 are Cytoplasmic-facing. Residues Val-25–Tyr-45 traverse the membrane as a helical segment. Residues Ala-46 to Thr-165 lie on the Extracellular side of the membrane. The helical transmembrane segment at Val-166–Ala-186 threads the bilayer. Residues Arg-187–Glu-239 form the HAMP domain. Residues Arg-187–Leu-515 are Cytoplasmic-facing. The 221-residue stretch at Asp-247–Pro-467 folds into the Histidine kinase domain. Residue His-250 is modified to Phosphohistidine; by autocatalysis. A disordered region spans residues Leu-468–Leu-515.

Mg(2+) is required as a cofactor. It depends on Mn(2+) as a cofactor. In terms of processing, autophosphorylated.

It localises to the cell membrane. The catalysed reaction is ATP + protein L-histidine = ADP + protein N-phospho-L-histidine.. In terms of biological role, member of the two-component regulatory system MprB/MprA which contributes to maintaining a balance among several systems involved in stress resistance and is required for establishment and maintenance of persistent infection in the host. In response to environmental signals MprB acts both as a membrane-associated protein kinase that undergoes autophosphorylation and subsequently transfers the phosphate to MprA, and a protein phosphatase that dephosphorylates phospho-MprA. This Mycobacterium sp. (strain KMS) protein is Signal transduction histidine-protein kinase/phosphatase MprB (mprB).